Consider the following 318-residue polypeptide: tRNA methyltransferase 10 homolog B (318 aa).

A compositionally biased stretch (basic and acidic residues) spans 1-10 (MDCKSEESAQ). A disordered region spans residues 1-105 (MDCKSEESAQ…DPGNGTCPQH (105 aa)). Residues 52–63 (SPANSAVWSSKN) are compositionally biased toward polar residues. Positions 64 to 83 (MQRKQRHWERIVSSKKSKRK) are enriched in basic residues. A coiled-coil region spans residues 72–93 (ERIVSSKKSKRKQERERRKAKR). The span at 84-96 (QERERRKAKRAED) shows a compositional bias: basic and acidic residues. Positions 114-311 (TKEKLLEAKH…KGVSPGKGYV (198 aa)) constitute an SAM-dependent MTase TRM10-type domain.

This sequence belongs to the class IV-like SAM-binding methyltransferase superfamily. TRM10 family.

The enzyme catalyses guanosine(9) in tRNA + S-adenosyl-L-methionine = N(1)-methylguanosine(9) in tRNA + S-adenosyl-L-homocysteine + H(+). In terms of biological role, S-adenosyl-L-methionine-dependent guanine N(1)-methyltransferase that catalyzes the formation of N(1)-methylguanine at position 9 (m1G9) in tRNAs. Probably not able to catalyze formation of N(1)-methyladenine at position 9 (m1A9) in tRNAs. The protein is tRNA methyltransferase 10 homolog B (Trmt10b) of Mus musculus (Mouse).